A 38-amino-acid chain; its full sequence is Photosystem II reaction center protein L (38 aa).

A helical membrane pass occupies residues 17–37 (SLYWGLLLIXVLAVLFSNYFF).

The protein belongs to the PsbL family. In terms of assembly, PSII is composed of 1 copy each of membrane proteins PsbA, PsbB, PsbC, PsbD, PsbE, PsbF, PsbH, PsbI, PsbJ, PsbK, PsbL, PsbM, PsbT, PsbX, PsbY, PsbZ, Psb30/Ycf12, at least 3 peripheral proteins of the oxygen-evolving complex and a large number of cofactors. It forms dimeric complexes.

Its subcellular location is the plastid. The protein resides in the chloroplast thylakoid membrane. Functionally, one of the components of the core complex of photosystem II (PSII). PSII is a light-driven water:plastoquinone oxidoreductase that uses light energy to abstract electrons from H(2)O, generating O(2) and a proton gradient subsequently used for ATP formation. It consists of a core antenna complex that captures photons, and an electron transfer chain that converts photonic excitation into a charge separation. This subunit is found at the monomer-monomer interface and is required for correct PSII assembly and/or dimerization. This chain is Photosystem II reaction center protein L, found in Allium textile (Textile onion).